A 470-amino-acid polypeptide reads, in one-letter code: GTPase Der (470 aa).

2 consecutive EngA-type G domains span residues 32-195 and 206-379; these read PVVA…PTIS and RRVA…KSWD. Residues 38–45, 85–89, 147–150, 212–219, 259–263, and 324–327 each bind GTP; these read GRPNVGKS, DTGGW, NKVD, GKPNVGKS, DTAGL, and NKWD. The KH-like domain occupies 380–462; it reads TRVSTGRLNT…PIRINVRVRE (83 aa).

Belongs to the TRAFAC class TrmE-Era-EngA-EngB-Septin-like GTPase superfamily. EngA (Der) GTPase family. Associates with the 50S ribosomal subunit.

GTPase that plays an essential role in the late steps of ribosome biogenesis. This Mycolicibacterium vanbaalenii (strain DSM 7251 / JCM 13017 / BCRC 16820 / KCTC 9966 / NRRL B-24157 / PYR-1) (Mycobacterium vanbaalenii) protein is GTPase Der.